Consider the following 1178-residue polypeptide: Phosphate system positive regulatory protein PHO81 (1178 aa).

The SPX domain occupies Met-1–Ala-169. A disordered region spans residues Gln-210–Leu-250. The segment covering Asn-223–Leu-250 has biased composition (low complexity). ANK repeat units follow at residues His-423–Val-452, Asp-458–Ser-487, Val-506–Ala-535, Thr-556–Glu-586, Asn-591–Ile-620, and Asn-624–Ser-653. A GP-PDE domain is found at Ile-871–Met-1178. Ser-956 is subject to Phosphoserine.

Associates specifically with the PHO80-PHO85 and PCL7-PHO85 cyclin-CDK complexes, and much of this interaction is mediated through the PHO80 and PCL7 cyclin subunits. Interacts with the transcription factor PHO4. In terms of processing, phosphorylated by the cyclin-CDK PHO80-PHO85. Phosphorylation mediates the formation of a stable interaction with the cyclin-CDK and is required for function as an active inhibitor of the complex under phosphate starvation conditions.

It is found in the cytoplasm. The protein localises to the nucleus. In terms of biological role, inhibits the kinase activity of the cyclin-CDKs PHO80-PHO85 and PCL7-PHO85 under low-phosphate conditions. In Saccharomyces cerevisiae (strain ATCC 204508 / S288c) (Baker's yeast), this protein is Phosphate system positive regulatory protein PHO81 (PHO81).